A 227-amino-acid chain; its full sequence is Cell wall mannoprotein CIS3 (227 aa).

A signal peptide spans Met1–Ala21. A propeptide spanning residues Glu22 to Arg64 is cleaved from the precursor. The stretch at Asp65–Thr78 is one PIR1/2/3 repeat. O-linked (Man) serine glycosylation is present at Ser68. Thr78 carries an O-linked (Man) threonine glycan. The span at Ala83–Ser124 shows a compositional bias: low complexity. The interval Ala83–Asp127 is disordered. O-linked (Man) serine glycans are attached at residues Ser105, Ser106, Ser107, and Ser109. O-linked (Man) threonine glycosylation is present at Thr111. The O-linked (Man) serine glycan is linked to Ser112. Residue Thr113 is glycosylated (O-linked (Man) threonine). A glycan (N-linked (GlcNAc...) asparagine) is linked at Asn114. Thr116 carries an O-linked (Man) threonine glycan. Ser117 and Ser118 each carry an O-linked (Man) serine glycan.

Belongs to the PIR protein family. In terms of processing, covalently linked to beta-1,3-glucan of the inner cell wall layer via an alkali-sensitive ester linkage between the gamma-carboxyl group of glutamic acid, arising from Gln-74 within the PIR1/2/3 repeat, and hydroxyl groups of glucoses of beta-1,3-glucan chains. Post-translationally, extensively O-mannosylated. Also N-glycosylated.

Its subcellular location is the secreted. The protein resides in the cell wall. Functionally, component of the outer cell wall layer. Required for stability of the cell wall and for optimal growth. Required for resistance against several antifungal and cell wall-perturbing agents. This chain is Cell wall mannoprotein CIS3 (CIS3), found in Saccharomyces cerevisiae (strain ATCC 204508 / S288c) (Baker's yeast).